The following is a 957-amino-acid chain: Glycine dehydrogenase (decarboxylating) (957 aa).

K708 carries the post-translational modification N6-(pyridoxal phosphate)lysine.

The protein belongs to the GcvP family. As to quaternary structure, the glycine cleavage system is composed of four proteins: P, T, L and H. Requires pyridoxal 5'-phosphate as cofactor.

It carries out the reaction N(6)-[(R)-lipoyl]-L-lysyl-[glycine-cleavage complex H protein] + glycine + H(+) = N(6)-[(R)-S(8)-aminomethyldihydrolipoyl]-L-lysyl-[glycine-cleavage complex H protein] + CO2. Functionally, the glycine cleavage system catalyzes the degradation of glycine. The P protein binds the alpha-amino group of glycine through its pyridoxal phosphate cofactor; CO(2) is released and the remaining methylamine moiety is then transferred to the lipoamide cofactor of the H protein. This chain is Glycine dehydrogenase (decarboxylating), found in Salmonella arizonae (strain ATCC BAA-731 / CDC346-86 / RSK2980).